We begin with the raw amino-acid sequence, 218 residues long: Embryonic polyadenylate-binding protein 2-A (218 aa).

A compositionally biased stretch (basic and acidic residues) spans 1 to 16; the sequence is MSERVSEEPGLDKGDG. 2 disordered regions span residues 1-26 and 169-218; these read MSERVSEEPGLDKGDGAEECELDDPE and RTNM…NHPY. One can recognise an RRM domain in the interval 93 to 170; sequence RSVYVGNVDY…RTIKVLPKRT (78 aa). Positions 205-218 are enriched in low complexity; that stretch reads FRGCGRPGPLNHPY.

Its subcellular location is the cytoplasm. Its function is as follows. Binds the poly(A) tail of mRNA. Unable to interact with the cap-binding complex and is therefore unlikely to be involved in translation initiation. The protein is Embryonic polyadenylate-binding protein 2-A (Pabpn1l-a) of Xenopus laevis (African clawed frog).